A 323-amino-acid polypeptide reads, in one-letter code: MKKIIFAFIILFVFLLPMIIFYQPWVNALPSTPRHASPEQLEKTVRYLTQTVHPRSADNIDNLNRSAEYIKEVFVSSGARVTSQDVPITGGPYKNIVADYGPADGPLIIIGAHYDSASSYENDQLTYTPGADDNASGVAGLLELARLLHQQVPKTGVQLVAYASEEPPFFRSDEMGSAVHAASLERPVKLMIALEMIGYYDSAPGSQNYPYPAMSWLYPDRGDFIAVVGRIQDINAVRQVKAALLSSQDLSVYSMNTPGFIPGIDFSDHLNYWQHDIPAIMITDTAFYRNKQYHLPGDTADRLNYQKMAQVVDGVITLLYNSK.

The chain crosses the membrane as a helical span at residues 4 to 24 (IIFAFIILFVFLLPMIIFYQP).

The protein localises to the membrane. This is an uncharacterized protein from Escherichia coli (strain K12).